We begin with the raw amino-acid sequence, 457 residues long: NADH-quinone oxidoreductase subunit D (457 aa).

The tract at residues Met1 to Glu23 is disordered.

The protein belongs to the complex I 49 kDa subunit family. NDH-1 is composed of 14 different subunits. Subunits NuoB, C, D, E, F, and G constitute the peripheral sector of the complex.

It localises to the cell membrane. The enzyme catalyses a quinone + NADH + 5 H(+)(in) = a quinol + NAD(+) + 4 H(+)(out). NDH-1 shuttles electrons from NADH, via FMN and iron-sulfur (Fe-S) centers, to quinones in the respiratory chain. The immediate electron acceptor for the enzyme in this species is believed to be a menaquinone. Couples the redox reaction to proton translocation (for every two electrons transferred, four hydrogen ions are translocated across the cytoplasmic membrane), and thus conserves the redox energy in a proton gradient. The polypeptide is NADH-quinone oxidoreductase subunit D (Parafrankia sp. (strain EAN1pec)).